The chain runs to 985 residues: Phosphoenolpyruvate carboxylase (985 aa).

Positions 1–17 (MTQSAARRASSRATPAR) are enriched in low complexity. The tract at residues 1 to 55 (MTQSAARRASSRATPARKTPPAPASQTPAPSPGGTAGTALGPTSRRSSGSAAAKD) is disordered. Active-site residues include histidine 193 and lysine 634.

The protein belongs to the PEPCase type 1 family. The cofactor is Mg(2+).

The catalysed reaction is oxaloacetate + phosphate = phosphoenolpyruvate + hydrogencarbonate. Functionally, forms oxaloacetate, a four-carbon dicarboxylic acid source for the tricarboxylic acid cycle. This Ralstonia nicotianae (strain ATCC BAA-1114 / GMI1000) (Ralstonia solanacearum) protein is Phosphoenolpyruvate carboxylase.